We begin with the raw amino-acid sequence, 401 residues long: Cysteine desulfurase (401 aa).

Pyridoxal 5'-phosphate is bound by residues 72 to 73, Asn-151, Gln-179, and 199 to 201; these read AT and SAH. At Lys-202 the chain carries N6-(pyridoxal phosphate)lysine. A pyridoxal 5'-phosphate-binding site is contributed by Thr-237. The active-site Cysteine persulfide intermediate is Cys-324. Cys-324 lines the [2Fe-2S] cluster pocket.

The protein belongs to the class-V pyridoxal-phosphate-dependent aminotransferase family. NifS/IscS subfamily. Homodimer. Pyridoxal 5'-phosphate is required as a cofactor.

The enzyme catalyses (sulfur carrier)-H + L-cysteine = (sulfur carrier)-SH + L-alanine. Its function is as follows. Catalyzes the removal of elemental sulfur atoms from cysteine to produce alanine. Seems to participate in the biosynthesis of the nitrogenase metalloclusters by providing the inorganic sulfur required for the Fe-S core formation. The polypeptide is Cysteine desulfurase (Enterobacter agglomerans (Erwinia herbicola)).